Reading from the N-terminus, the 318-residue chain is E3 ubiquitin-protein ligase NRDP1 (318 aa).

The segment at 18-57 (CPICSGVLEEPVRAPHCEHAFCNACITQWFAQQQICPVDR) adopts an RING-type; degenerate zinc-finger fold. The segment at 78-138 (KLQISCDNAG…MPNHNCIKHL (61 aa)) adopts an SIAH-type; degenerate zinc-finger fold.

The enzyme catalyses S-ubiquitinyl-[E2 ubiquitin-conjugating enzyme]-L-cysteine + [acceptor protein]-L-lysine = [E2 ubiquitin-conjugating enzyme]-L-cysteine + N(6)-ubiquitinyl-[acceptor protein]-L-lysine.. It participates in protein modification; protein ubiquitination. Acts as E3 ubiquitin-protein ligase and regulates the degradation of target proteins. In Danio rerio (Zebrafish), this protein is E3 ubiquitin-protein ligase NRDP1 (rnf41).